The primary structure comprises 83 residues: Small ribosomal subunit protein bS16 (83 aa).

It belongs to the bacterial ribosomal protein bS16 family.

The chain is Small ribosomal subunit protein bS16 from Borrelia turicatae (strain 91E135).